Reading from the N-terminus, the 219-residue chain is Cell division protein B2 (219 aa).

Its function is as follows. Part of a cell division machinery. The protein is Cell division protein B2 of Sulfolobus acidocaldarius (strain ATCC 33909 / DSM 639 / JCM 8929 / NBRC 15157 / NCIMB 11770).